The following is a 2123-amino-acid chain: Toxin Afp18 (2123 aa).

Residues 864-919 are disordered; it reads FFDNSDQDADQPRVRRKREMTDEIMLSDGSSRSEAKALPDENELDTDQSKSRPESA. Residues 1771–2123 are tyrosine glycosyltransferase; sequence VFDSANTNRS…GNSTQSSGLS (353 aa). UDP-N-acetyl-alpha-D-glucosamine is bound by residues 1850 to 1852 and 1940 to 1941; these read IWV and SD. Residues Asp1957 and Asp1959 each coordinate a divalent metal cation. The short motif at 1957–1960 is the DxDD motif element; sequence DIDD. Residue Asn1993 participates in UDP-N-acetyl-alpha-D-glucosamine binding.

A divalent metal cation serves as cofactor.

The protein localises to the secreted. It localises to the host cell membrane. It catalyses the reaction L-tyrosyl-[protein] + UDP-N-acetyl-alpha-D-glucosamine = O-(N-acetyl-alpha-D-glucosaminyl)-L-tyrosyl-[protein] + UDP + H(+). Toxin component of the prophage tail-derived protein translocation system Afp, which is the causative agent of enteric redmouth disease in salmonid fish species. Mono-O-GlcNAcylates the small GTPase RhoA in eukaryotic host cells at Tyr-34, using UDP-N-acetylglucosamine (UDP-GlcNAc) as the sugar donor. Glycosylation of RhoA results in impaired effector and regulator interaction and inactivation of downstream RhoA signaling which leads to actin filament depolymerization and blocks cytokinesis and gastrulation during zebrafish embryo development. To a lesser extent, is also able to glycosylate other Rho family GTPases (RhoB, RhoC, Rac1, Rac2, Rac3, and Cdc42) in vitro at a switch I tyrosine residue, but not Ras proteins. The chain is Toxin Afp18 from Yersinia ruckeri serotype O1 (strain ATCC 29473 / DSM 18506 / JCM 15110 / CCUG 14190 / NCIMB 2194 / NCTC 12986 / 2396-61).